An 83-amino-acid chain; its full sequence is Exodeoxyribonuclease 7 small subunit (83 aa).

A disordered region spans residues 63 to 83 (VQNDDGTTGTEPLADTGESGR).

It belongs to the XseB family. In terms of assembly, heterooligomer composed of large and small subunits.

Its subcellular location is the cytoplasm. It carries out the reaction Exonucleolytic cleavage in either 5'- to 3'- or 3'- to 5'-direction to yield nucleoside 5'-phosphates.. Bidirectionally degrades single-stranded DNA into large acid-insoluble oligonucleotides, which are then degraded further into small acid-soluble oligonucleotides. The protein is Exodeoxyribonuclease 7 small subunit of Gluconobacter oxydans (strain 621H) (Gluconobacter suboxydans).